The sequence spans 690 residues: MGSSGLGKAATLDELLCTCIEMFDDNGELDNSYLPRIVLLMHRWYLSSTELAEKLLCMYRNATGESCNEFRLKICYFMRYWILKFPAEFNLDLGLIRMTEEFREVASQLGYEKHVSLIDISSIPSYDWMRRVTQRKKVSKKGKACLLFDHLEPIELAEHLTFLEHKSFRRISFTDYQSYVIHGCLENNPTLERSIALFNGISKWVQLMVLSKPTPQQRAEVITKFINVAKKLLQLKNFNTLMAVVGGLSHSSISRLKETHSHLSSEVTKNWNEMTELVSSNGNYCNYRKAFADCDGFKIPILGVHLKDLIAVHVIFPDWTEENKVNIVKMHQLSVTLSELVSLQNASHHLEPNMDLINLLTLSLDLYHTEDDIYKLSLVLEPRNSKSQPTSPTTPNKPVVPLEWALGVMPKPDPTVINKHIRKLVESVFRNYDHDHDGYISQEDFESIAANFPFLDSFCVLDKDQDGLISKDEMMAYFLRAKSQLHCKMGPGFIHNFQEMTYLKPTFCEHCAGFLWGIIKQGYKCKDCGANCHKQCKDLLVLACRRFARAPSLSSGHGSLPGSPSLPPAQDEVFEFPGVTAGHRDLDSRAITLVTGSSRKISVRLQRATTSQATQTEPVWSEAGWGDSGSHTFPKMKSKFHDKAAKDKGFAKWENEKPRVHAGVDVVDRGTEFELDQDEGEETRQDGEDG.

An N-terminal Ras-GEF domain is found at 3–125 (SSGLGKAATL…SLIDISSIPS (123 aa)). A Ras-GEF domain is found at 152-383 (EPIELAEHLT…YKLSLVLEPR (232 aa)). 2 consecutive EF-hand domains span residues 420 to 455 (HIRK…FPFL) and 458 to 484 (FCVL…AKSQ). 9 residues coordinate Ca(2+): Asp433, Asp435, Asp437, Tyr439, Asp444, Asp462, Asp464, Asp466, and Glu473. The Phorbol-ester/DAG-type zinc finger occupies 494 to 544 (IHNFQEMTYLKPTFCEHCAGFLWGIIKQGYKCKDCGANCHKQCKDLLVLAC). A disordered region spans residues 667–690 (VDRGTEFELDQDEGEETRQDGEDG).

This sequence belongs to the RASGRP family.

Functionally, guanine nucleotide exchange factor (GEF) for Ras and Rap1. This is Ras guanyl-releasing protein 3 (RASGRP3) from Homo sapiens (Human).